Reading from the N-terminus, the 288-residue chain is UPF0276 protein VP3015 (288 aa).

The protein belongs to the UPF0276 family.

The sequence is that of UPF0276 protein VP3015 from Vibrio parahaemolyticus serotype O3:K6 (strain RIMD 2210633).